The primary structure comprises 439 residues: Histidinol dehydrogenase (439 aa).

3 residues coordinate NAD(+): Y129, Q193, and N222. Residues T245, Q267, and H270 each coordinate substrate. Positions 267 and 270 each coordinate Zn(2+). Catalysis depends on proton acceptor residues E336 and H337. H337, D370, E424, and H429 together coordinate substrate. D370 is a Zn(2+) binding site. Position 429 (H429) interacts with Zn(2+).

The protein belongs to the histidinol dehydrogenase family. The cofactor is Zn(2+).

The enzyme catalyses L-histidinol + 2 NAD(+) + H2O = L-histidine + 2 NADH + 3 H(+). The protein operates within amino-acid biosynthesis; L-histidine biosynthesis; L-histidine from 5-phospho-alpha-D-ribose 1-diphosphate: step 9/9. Its function is as follows. Catalyzes the sequential NAD-dependent oxidations of L-histidinol to L-histidinaldehyde and then to L-histidine. The sequence is that of Histidinol dehydrogenase from Cutibacterium acnes (strain DSM 16379 / KPA171202) (Propionibacterium acnes).